The chain runs to 921 residues: Protein translocase subunit SecA (921 aa).

Residues Q87, 105-109, and D516 contribute to the ATP site; that span reads GEGKT. Residues C905, C907, C916, and H917 each coordinate Zn(2+).

Belongs to the SecA family. As to quaternary structure, monomer and homodimer. Part of the essential Sec protein translocation apparatus which comprises SecA, SecYEG and auxiliary proteins SecDF-YajC and YidC. The cofactor is Zn(2+).

The protein localises to the cell inner membrane. The protein resides in the cytoplasm. The enzyme catalyses ATP + H2O + cellular proteinSide 1 = ADP + phosphate + cellular proteinSide 2.. Part of the Sec protein translocase complex. Interacts with the SecYEG preprotein conducting channel. Has a central role in coupling the hydrolysis of ATP to the transfer of proteins into and across the cell membrane, serving both as a receptor for the preprotein-SecB complex and as an ATP-driven molecular motor driving the stepwise translocation of polypeptide chains across the membrane. This Polaromonas sp. (strain JS666 / ATCC BAA-500) protein is Protein translocase subunit SecA.